A 319-amino-acid chain; its full sequence is Inositol-tetrakisphosphate 1-kinase 1 (319 aa).

An N-acetylserine modification is found at S2. Residues K18 and K60 each contribute to the 1D-myo-inositol 1,3,4-trisphosphate site. ATP contacts are provided by R95 and K145. An ATP-grasp domain is found at 99-318; that stretch reads LEVITQLRFP…FWDMVTKKNH (220 aa). 1D-myo-inositol 1,3,4-trisphosphate contacts are provided by H156 and K188. ATP-binding positions include 177–188 and S203; that span reads QEFVNHGGVIFK. Residues D273, D288, and N290 each contribute to the Mg(2+) site. N290 serves as a coordination point for 1D-myo-inositol 1,3,4-trisphosphate.

This sequence belongs to the ITPK1 family. In terms of assembly, monomer. The cofactor is Mg(2+). In terms of tissue distribution, expressed in siliques.

The enzyme catalyses 1D-myo-inositol 3,4,5,6-tetrakisphosphate + ATP = 1D-myo-inositol 1,3,4,5,6-pentakisphosphate + ADP + H(+). It carries out the reaction 1D-myo-inositol 1,3,4-trisphosphate + ATP = 1D-myo-inositol 1,3,4,5-tetrakisphosphate + ADP + H(+). The catalysed reaction is 1D-myo-inositol 1,3,4-trisphosphate + ATP = 1D-myo-inositol 1,3,4,6-tetrakisphosphate + ADP + H(+). Its function is as follows. Kinase that can phosphorylate various inositol polyphosphate such as Ins(3,4,5,6)P4 or Ins(1,3,4)P3. Phosphorylates Ins(3,4,5,6)P4 at position 1 to form Ins(1,3,4,5,6)P5. This reaction is thought to have regulatory importance, since Ins(3,4,5,6)P4 is an inhibitor of plasma membrane Ca(2+)-activated Cl(-) channels, while Ins(1,3,4,5,6)P5 is not. Also phosphorylates Ins(1,3,4)P3 on O-5 and O-6 to form Ins(1,3,4,6)P4, an essential molecule in the hexakisphosphate (InsP6) pathway. In Arabidopsis thaliana (Mouse-ear cress), this protein is Inositol-tetrakisphosphate 1-kinase 1 (ITPK1).